Consider the following 355-residue polypeptide: Lamassu protein LmuA (355 aa).

Functionally, component of antiviral defense system Lamassu type II, composed of LmuA and LmuB. Expression of Lamassu type II in B.subtilis (strain BEST7003) confers resistance to phage SpBeta. May be a nuclease. The sequence is that of Lamassu protein LmuA from Bacillus cereus (strain VD014).